Here is a 196-residue protein sequence, read N- to C-terminus: Adenylate kinase (196 aa).

9–17 (GIPGVGKST) contributes to the ATP binding site.

This sequence belongs to the archaeal adenylate kinase family.

The protein resides in the cytoplasm. It catalyses the reaction AMP + ATP = 2 ADP. This chain is Adenylate kinase, found in Thermococcus sibiricus (strain DSM 12597 / MM 739).